Here is a 504-residue protein sequence, read N- to C-terminus: Anaerobic nitric oxide reductase transcription regulator NorR (504 aa).

Position 57 is a 4-aspartylphosphate (Asp57). Positions 187–416 constitute a Sigma-54 factor interaction domain; it reads MIGLSPGMTQ…LEHAIHRAVV (230 aa). ATP-binding positions include 215–222 and 278–287; these read GETGTGKE and ADNGTLFLDE. A DNA-binding region (H-T-H motif) is located at residues 479–498; that stretch reads WAASARMLETDVANLHRLAK.

The protein operates within nitrogen metabolism; nitric oxide reduction. In terms of biological role, required for the expression of anaerobic nitric oxide (NO) reductase, acts as a transcriptional activator for at least the norVW operon. Activation also requires sigma-54. The chain is Anaerobic nitric oxide reductase transcription regulator NorR from Escherichia coli (strain SMS-3-5 / SECEC).